A 130-amino-acid chain; its full sequence is General stress protein 13 (130 aa).

Residues 8-77 (GSVYTGKVTG…EKGKISLSIR (70 aa)) enclose the S1 motif domain. The disordered stretch occupies residues 76-109 (IRATQAAPEKKESKPRKPKAAQVSEEASTPQGFN). Polar residues predominate over residues 100–109 (EEASTPQGFN).

In terms of assembly, found in association with the 30S subunit of the ribosome.

Its subcellular location is the cytoplasm. The polypeptide is General stress protein 13 (yugI) (Bacillus subtilis (strain 168)).